The following is a 129-amino-acid chain: Glycine cleavage system H protein (129 aa).

Positions 24 to 106 (SYTVGISEHA…FGDGWFFRVM (83 aa)) constitute a Lipoyl-binding domain. N6-lipoyllysine is present on Lys65.

It belongs to the GcvH family. In terms of assembly, the glycine cleavage system is composed of four proteins: P, T, L and H. (R)-lipoate is required as a cofactor.

In terms of biological role, the glycine cleavage system catalyzes the degradation of glycine. The H protein shuttles the methylamine group of glycine from the P protein to the T protein. The protein is Glycine cleavage system H protein of Shewanella woodyi (strain ATCC 51908 / MS32).